The chain runs to 884 residues: DNA mismatch repair protein MutS (884 aa).

651-658 (GPNMSGKS) contributes to the ATP binding site. The interval 843–884 (LRNQGKSQPAQKNCKKEPAPNRSPDPAVGDQLSLIPAPLFPD) is disordered.

It belongs to the DNA mismatch repair MutS family.

This protein is involved in the repair of mismatches in DNA. It is possible that it carries out the mismatch recognition step. This protein has a weak ATPase activity. The chain is DNA mismatch repair protein MutS from Synechococcus sp. (strain JA-2-3B'a(2-13)) (Cyanobacteria bacterium Yellowstone B-Prime).